The primary structure comprises 355 residues: Peptide chain release factor 1 (355 aa).

Residue Gln233 is modified to N5-methylglutamine.

This sequence belongs to the prokaryotic/mitochondrial release factor family. Post-translationally, methylated by PrmC. Methylation increases the termination efficiency of RF1.

The protein localises to the cytoplasm. In terms of biological role, peptide chain release factor 1 directs the termination of translation in response to the peptide chain termination codons UAG and UAA. In Bacillus cytotoxicus (strain DSM 22905 / CIP 110041 / 391-98 / NVH 391-98), this protein is Peptide chain release factor 1.